We begin with the raw amino-acid sequence, 566 residues long: Solute carrier family 2, facilitated glucose transporter member 9 (566 aa).

A disordered region spans residues 1–31 (MARKQNRNSKELGLAPLADDTSHAGPPGPGR). Residues 1 to 51 (MARKQNRNSKELGLAPLADDTSHAGPPGPGRALLECDHLRSGLPDGRRRKD) are Cytoplasmic-facing. Position 9 is a phosphoserine (serine 9). The chain crosses the membrane as a helical span at residues 52 to 72 (WSCSLLVASLAGAFGSSFLYG). Residues 73–107 (YNLSVVNAPTPYIKAFYNESWERRHGRPIDPDTLT) lie on the Extracellular side of the membrane. 2 N-linked (GlcNAc...) asparagine glycosylation sites follow: asparagine 74 and asparagine 90. The chain crosses the membrane as a helical span at residues 108-128 (LLWSVTVSIFAIGGLVGTLMV). The Cytoplasmic portion of the chain corresponds to 129-140 (KMIGKVLGRKHT). Residues 141 to 161 (LLANNGFAISAALLMACSLQA) form a helical membrane-spanning segment. Residues 162–171 (GAFEMLIVGR) lie on the Extracellular side of the membrane. A helical membrane pass occupies residues 172–192 (FIMGIDGGIALSVLPMYLSEI). The Cytoplasmic segment spans residues 193-200 (SPKEIRGS). The helical transmembrane segment at 201 to 221 (LGQVTAIFICIGVFTGQLLGL) threads the bilayer. Residues 222 to 231 (PELLGKESTW) lie on the Extracellular side of the membrane. A helical membrane pass occupies residues 232–252 (PYLFGVIVVPAVVQLLSLPFL). At 253-316 (PDSPRYLLLE…LRAPYVRWQV (64 aa)) the chain is on the cytoplasmic side. A helical transmembrane segment spans residues 317-337 (VTVIVTMACYQLCGLNAIWFY). At 338-354 (TNSIFGKAGIPPAKIPY) the chain is on the extracellular side. Residues 355–375 (VTLSTGGIETLAAIFSGLVIE) form a helical membrane-spanning segment. Over 376–381 (HLGRRP) the chain is Cytoplasmic. A helical membrane pass occupies residues 382–402 (LLIGGFGLMALFFGTLTVTLT). Topologically, residues 403 to 415 (LQDRAPWVPYLSI) are extracellular. Residues 416–436 (VGILAIIASFCSGPGGIPFIL) traverse the membrane as a helical segment. The Cytoplasmic portion of the chain corresponds to 437–451 (TGEFFQQSQRPAAFI). The helical transmembrane segment at 452–472 (IAGTVNWLSNFAVGLLFPFIQ) threads the bilayer. The Extracellular segment spans residues 473–478 (KSLDTY). A helical membrane pass occupies residues 479–499 (CFLVFATICMTGAIYLYFVLP). At 500 to 566 (ETKNRTYAEI…YMDDLTFQET (67 aa)) the chain is on the cytoplasmic side. Serine 514 bears the Phosphoserine mark. Residues 524 to 539 (EKIDSAVTDGKTKGRP) show a composition bias toward basic and acidic residues. A disordered region spans residues 524 to 543 (EKIDSAVTDGKTKGRPEQVS).

This sequence belongs to the major facilitator superfamily. Sugar transporter (TC 2.A.1.1) family.

The protein resides in the basolateral cell membrane. The protein localises to the apical cell membrane. It carries out the reaction urate(out) = urate(in). High-capacity urate transporter, which may play a role in the urate reabsorption by proximal tubules. May have a residual high-affinity, low-capacity glucose and fructose transporter activity. Transports urate at rates 45- to 60-fold faster than glucose. Does not transport galactose. May mediate small uptake of adenine but not of other nucleobases. The protein is Solute carrier family 2, facilitated glucose transporter member 9 of Pongo abelii (Sumatran orangutan).